An 87-amino-acid chain; its full sequence is UPF0386 protein RSKD131_0371 (87 aa).

This sequence belongs to the UPF0386 family.

The chain is UPF0386 protein RSKD131_0371 from Cereibacter sphaeroides (strain KD131 / KCTC 12085) (Rhodobacter sphaeroides).